The following is a 579-amino-acid chain: Peptidyl-prolyl cis-trans isomerase-like 2 (579 aa).

In terms of domain architecture, U-box spans 42–115 (RRLPFNFCSL…GEYVDPVTYK (74 aa)). A disordered region spans residues 227–261 (AERAQRAESGAASKGLTKPGMSATAASQKTVSHQA). Positions 250 to 259 (TAASQKTVSH) are enriched in polar residues. The 160-residue stretch at 311–470 (QKGYARISTT…PDIRIKDVTI (160 aa)) folds into the PPIase cyclophilin-type domain. The tract at residues 555–579 (EGPEPEPAKKKFKGGGGFGDFSSWD) is disordered.

It belongs to the cyclophilin-type PPIase family. PPIL2 subfamily.

The protein localises to the nucleus. The catalysed reaction is [protein]-peptidylproline (omega=180) = [protein]-peptidylproline (omega=0). It carries out the reaction S-ubiquitinyl-[E2 ubiquitin-conjugating enzyme]-L-cysteine + [acceptor protein]-L-lysine = [E2 ubiquitin-conjugating enzyme]-L-cysteine + N(6)-ubiquitinyl-[acceptor protein]-L-lysine.. Its pathway is protein modification; protein ubiquitination. Functionally, may catalyze the cis-trans isomerization of proline imidic peptide bonds in oligopeptides thereby assisting the folding of proteins. May also function as a chaperone, playing a role in intracellular transport of proteins. May also have a protein ubiquitin ligase activity acting as an E3 ubiquitin protein ligase or as a ubiquitin-ubiquitin ligase promoting elongation of ubiquitin chains on proteins. The polypeptide is Peptidyl-prolyl cis-trans isomerase-like 2 (cyp8) (Aspergillus fumigatus (strain ATCC MYA-4609 / CBS 101355 / FGSC A1100 / Af293) (Neosartorya fumigata)).